Here is a 124-residue protein sequence, read N- to C-terminus: Small ribosomal subunit protein uS12 (124 aa).

Residues 1-32 (MPTIQQLVRKGRQDKVSKNKTPALKGSPQRRG) form a disordered region. Residue D89 is modified to 3-methylthioaspartic acid.

The protein belongs to the universal ribosomal protein uS12 family. In terms of assembly, part of the 30S ribosomal subunit. Contacts proteins S8 and S17. May interact with IF1 in the 30S initiation complex.

Its function is as follows. With S4 and S5 plays an important role in translational accuracy. In terms of biological role, interacts with and stabilizes bases of the 16S rRNA that are involved in tRNA selection in the A site and with the mRNA backbone. Located at the interface of the 30S and 50S subunits, it traverses the body of the 30S subunit contacting proteins on the other side and probably holding the rRNA structure together. The combined cluster of proteins S8, S12 and S17 appears to hold together the shoulder and platform of the 30S subunit. The protein is Small ribosomal subunit protein uS12 of Nocardioides sp. (strain ATCC BAA-499 / JS614).